Reading from the N-terminus, the 155-residue chain is Protein-export protein SecB (155 aa).

This sequence belongs to the SecB family. In terms of assembly, homotetramer, a dimer of dimers. One homotetramer interacts with 1 SecA dimer.

The protein localises to the cytoplasm. In terms of biological role, one of the proteins required for the normal export of preproteins out of the cell cytoplasm. It is a molecular chaperone that binds to a subset of precursor proteins, maintaining them in a translocation-competent state. It also specifically binds to its receptor SecA. The protein is Protein-export protein SecB of Vibrio vulnificus (strain CMCP6).